Consider the following 452-residue polypeptide: Zinc finger protein 672 (452 aa).

4 consecutive C2H2-type zinc fingers follow at residues 14-36 (YSCS…ERAH), 42-64 (FRCL…RRTH), 70-92 (YICS…LGAH), and 99-122 (CPCR…RRQH). The C2H2-type 5; degenerate zinc-finger motif lies at 128–150 (RRCPLCARTFRQSALLFHQARAH). C2H2-type zinc fingers lie at residues 163 to 185 (HRCA…ARIH), 199 to 221 (HQCG…LQTH), 227 to 249 (FKCP…QRTH), 255 to 277 (YACG…RRSH), 283 to 305 (HACA…QRIH), 311 to 333 (FACP…RRTH), 339 to 361 (YRCE…RRNH), 367 to 389 (HKCP…RKTH), and 395 to 417 (AECA…QRAH).

It belongs to the krueppel C2H2-type zinc-finger protein family.

The protein localises to the nucleus. Functionally, may be involved in transcriptional regulation. This Homo sapiens (Human) protein is Zinc finger protein 672.